The chain runs to 304 residues: Acetylglutamate kinase (304 aa).

Substrate is bound by residues 77–78 (GG), Arg-99, and Asn-201.

The protein belongs to the acetylglutamate kinase family. ArgB subfamily.

The protein localises to the cytoplasm. The catalysed reaction is N-acetyl-L-glutamate + ATP = N-acetyl-L-glutamyl 5-phosphate + ADP. It functions in the pathway amino-acid biosynthesis; L-arginine biosynthesis; N(2)-acetyl-L-ornithine from L-glutamate: step 2/4. In terms of biological role, catalyzes the ATP-dependent phosphorylation of N-acetyl-L-glutamate. In Methylibium petroleiphilum (strain ATCC BAA-1232 / LMG 22953 / PM1), this protein is Acetylglutamate kinase.